The chain runs to 925 residues: Protein translocase subunit SecA (925 aa).

ATP is bound by residues glutamine 87, glycine 105–threonine 109, and aspartate 531. A disordered region spans residues alanine 867–proline 909. The segment covering glutamine 895–arginine 906 has biased composition (basic and acidic residues). Positions 910, 912, 921, and 922 each coordinate Zn(2+).

Belongs to the SecA family. In terms of assembly, monomer and homodimer. Part of the essential Sec protein translocation apparatus which comprises SecA, SecYEG and auxiliary proteins SecDF-YajC and YidC. Zn(2+) is required as a cofactor.

It is found in the cell inner membrane. It localises to the cytoplasm. The enzyme catalyses ATP + H2O + cellular proteinSide 1 = ADP + phosphate + cellular proteinSide 2.. Part of the Sec protein translocase complex. Interacts with the SecYEG preprotein conducting channel. Has a central role in coupling the hydrolysis of ATP to the transfer of proteins into and across the cell membrane, serving both as a receptor for the preprotein-SecB complex and as an ATP-driven molecular motor driving the stepwise translocation of polypeptide chains across the membrane. This Thioalkalivibrio sulfidiphilus (strain HL-EbGR7) protein is Protein translocase subunit SecA.